We begin with the raw amino-acid sequence, 1064 residues long: Phosphatidylinositol 4,5-bisphosphate 3-kinase catalytic subunit beta isoform (1064 aa).

Residues 20 to 109 enclose the PI3K-ABD domain; sequence SDGAISVDFL…LPVLKLVTRS (90 aa). Positions 188–279 constitute a PI3K-RBD domain; sequence GGKLVVAVHF…RTLPHFILVE (92 aa). At Ser-318 the chain carries Phosphoserine. Positions 323–490 constitute a C2 PI3K-type domain; it reads NNNPFQITLV…NATALHITFP (168 aa). The Nuclear localization signal (NLS) motif lies at 404-412; the sequence is KVKTKKSTK. In terms of domain architecture, PIK helical spans 518–695; the sequence is ANVSSRGGKK…GVILEAYCRG (178 aa). In terms of domain architecture, PI3K/PI4K catalytic spans 766–1047; sequence YVEKCKYMDS…KFDEALRESW (282 aa). The tract at residues 772–778 is G-loop; sequence YMDSKMK. Residues 910–918 are catalytic loop; it reads GIGDRHSDN. The tract at residues 929-955 is activation loop; sequence HIDFGHILGNFKSKFGIKRERVPFILT. Ser-1064 is modified (phosphoserine; by autocatalysis).

It belongs to the PI3/PI4-kinase family. As to quaternary structure, heterodimer of a catalytic subunit PIK3CB and a p85 regulatory subunit (PIK3R1, PIK3R2 or PIK3R3). Interaction with PIK3R2 is required for nuclear localization and nuclear export. Part of a complex with PIK3R1 and PTEN. Binding to PTEN may antagonize the lipid kinase activity under normal growth conditions. Part of a complex involved in autophagosome formation composed of PIK3C3 and PIK3R4. Interacts with BECN1, ATG14 and RAB5A. Post-translationally, phosphorylation at Ser-1064 down-regulates lipid kinase activity. Autophosphorylation at Ser-1064 negatively regulates the phosphatidylinositol-4,5-bisphosphate 3-kinase activity.

It localises to the cytoplasm. The protein resides in the nucleus. The catalysed reaction is a 1,2-diacyl-sn-glycero-3-phospho-(1D-myo-inositol-4,5-bisphosphate) + ATP = a 1,2-diacyl-sn-glycero-3-phospho-(1D-myo-inositol-3,4,5-trisphosphate) + ADP + H(+). The enzyme catalyses 1-octadecanoyl-2-(5Z,8Z,11Z,14Z)-eicosatetraenoyl-sn-glycero-3-phospho-1D-myo-inositol 4,5-bisphosphate + ATP = 1-octadecanoyl-2-(5Z,8Z,11Z,14Z-eicosatetraenoyl)-sn-glycero-3-phospho-(1D-myo-inositol 3,4,5-triphosphate) + ADP + H(+). It catalyses the reaction L-seryl-[protein] + ATP = O-phospho-L-seryl-[protein] + ADP + H(+). Its pathway is phospholipid metabolism; phosphatidylinositol phosphate biosynthesis. Its function is as follows. Phosphoinositide-3-kinase (PI3K) phosphorylates phosphatidylinositol (PI) derivatives at position 3 of the inositol ring to produce 3-phosphoinositides. Uses ATP and PtdIns(4,5)P2 (phosphatidylinositol 4,5-bisphosphate) to generate phosphatidylinositol 3,4,5-trisphosphate (PIP3). PIP3 plays a key role by recruiting PH domain-containing proteins to the membrane, including AKT1 and PDPK1, activating signaling cascades involved in cell growth, survival, proliferation, motility and morphology. Involved in the activation of AKT1 upon stimulation by G-protein coupled receptors (GPCRs) ligands such as CXCL12, sphingosine 1-phosphate, and lysophosphatidic acid. May also act downstream receptor tyrosine kinases. Required in different signaling pathways for stable platelet adhesion and aggregation. Plays a role in platelet activation signaling triggered by GPCRs, alpha-IIb/beta-3 integrins (ITGA2B/ ITGB3) and ITAM (immunoreceptor tyrosine-based activation motif)-bearing receptors such as GP6. Regulates the strength of adhesion of ITGA2B/ ITGB3 activated receptors necessary for the cellular transmission of contractile forces. Required for platelet aggregation induced by F2 (thrombin) and thromboxane A2 (TXA2). Has a role in cell survival. May have a role in cell migration. Involved in the early stage of autophagosome formation. Modulates the intracellular level of PtdIns3P (phosphatidylinositol 3-phosphate) and activates PIK3C3 kinase activity. May act as a scaffold, independently of its lipid kinase activity to positively regulate autophagy. May have a role in insulin signaling as scaffolding protein in which the lipid kinase activity is not required. May have a kinase-independent function in regulating cell proliferation and in clathrin-mediated endocytosis. Mediator of oncogenic signal in cell lines lacking PTEN. The lipid kinase activity is necessary for its role in oncogenic transformation. Required for the growth of ERBB2 and RAS driven tumors. Also has a protein kinase activity showing autophosphorylation. This Mus musculus (Mouse) protein is Phosphatidylinositol 4,5-bisphosphate 3-kinase catalytic subunit beta isoform (Pik3cb).